A 359-amino-acid polypeptide reads, in one-letter code: Dual-specificity RNA methyltransferase RlmN 1 (359 aa).

Residue E96 is the Proton acceptor of the active site. Residues 102–335 (FKGRATVCIS…STVRQRRGID (234 aa)) form the Radical SAM core domain. Residues C109 and C340 are joined by a disulfide bond. [4Fe-4S] cluster-binding residues include C116, C120, and C123. Residues 166-167 (GE), S198, 221-223 (SLH), and N297 each bind S-adenosyl-L-methionine. C340 (S-methylcysteine intermediate) is an active-site residue.

The protein belongs to the radical SAM superfamily. RlmN family. [4Fe-4S] cluster serves as cofactor.

It is found in the cytoplasm. The catalysed reaction is adenosine(2503) in 23S rRNA + 2 reduced [2Fe-2S]-[ferredoxin] + 2 S-adenosyl-L-methionine = 2-methyladenosine(2503) in 23S rRNA + 5'-deoxyadenosine + L-methionine + 2 oxidized [2Fe-2S]-[ferredoxin] + S-adenosyl-L-homocysteine. It carries out the reaction adenosine(37) in tRNA + 2 reduced [2Fe-2S]-[ferredoxin] + 2 S-adenosyl-L-methionine = 2-methyladenosine(37) in tRNA + 5'-deoxyadenosine + L-methionine + 2 oxidized [2Fe-2S]-[ferredoxin] + S-adenosyl-L-homocysteine. In terms of biological role, specifically methylates position 2 of adenine 2503 in 23S rRNA and position 2 of adenine 37 in tRNAs. m2A2503 modification seems to play a crucial role in the proofreading step occurring at the peptidyl transferase center and thus would serve to optimize ribosomal fidelity. The sequence is that of Dual-specificity RNA methyltransferase RlmN 1 from Myxococcus xanthus (strain DK1622).